The following is a 156-amino-acid chain: ATP synthase subunit b (156 aa).

A helical transmembrane segment spans residues 7–29 (LFGQTIAFAIFVWFCMKFVWPPL).

Belongs to the ATPase B chain family. As to quaternary structure, F-type ATPases have 2 components, F(1) - the catalytic core - and F(0) - the membrane proton channel. F(1) has five subunits: alpha(3), beta(3), gamma(1), delta(1), epsilon(1). F(0) has three main subunits: a(1), b(2) and c(10-14). The alpha and beta chains form an alternating ring which encloses part of the gamma chain. F(1) is attached to F(0) by a central stalk formed by the gamma and epsilon chains, while a peripheral stalk is formed by the delta and b chains.

Its subcellular location is the cell inner membrane. F(1)F(0) ATP synthase produces ATP from ADP in the presence of a proton or sodium gradient. F-type ATPases consist of two structural domains, F(1) containing the extramembraneous catalytic core and F(0) containing the membrane proton channel, linked together by a central stalk and a peripheral stalk. During catalysis, ATP synthesis in the catalytic domain of F(1) is coupled via a rotary mechanism of the central stalk subunits to proton translocation. Its function is as follows. Component of the F(0) channel, it forms part of the peripheral stalk, linking F(1) to F(0). In Ectopseudomonas mendocina (strain ymp) (Pseudomonas mendocina), this protein is ATP synthase subunit b.